A 211-amino-acid polypeptide reads, in one-letter code: MFIVIEGCEGSGKSSLTQLLKDKLMAEGKAVVATREPGGSSLGERVRDWILDPSTTELSPYTELFLFLAARAQHITEKILPALELGKIVVCDRFHDSTIVYQGIVGGLGKEYVTNLCHSVVGQKKILPNLTCLLDIPADEGLKRKQQQKSFDKFENQSLAYHTKIREGFLSLAESRLDSYLVLDARQPIEESLNKVMTAYTELALCKSKER.

7-14 serves as a coordination point for ATP; it reads GCEGSGKS.

This sequence belongs to the thymidylate kinase family.

The enzyme catalyses dTMP + ATP = dTDP + ADP. Phosphorylation of dTMP to form dTDP in both de novo and salvage pathways of dTTP synthesis. The chain is Thymidylate kinase from Chlamydia abortus (strain DSM 27085 / S26/3) (Chlamydophila abortus).